The chain runs to 874 residues: Alanine--tRNA ligase (874 aa).

4 residues coordinate Zn(2+): H562, H566, C664, and H668.

The protein belongs to the class-II aminoacyl-tRNA synthetase family. Zn(2+) serves as cofactor.

The protein localises to the cytoplasm. It catalyses the reaction tRNA(Ala) + L-alanine + ATP = L-alanyl-tRNA(Ala) + AMP + diphosphate. Catalyzes the attachment of alanine to tRNA(Ala) in a two-step reaction: alanine is first activated by ATP to form Ala-AMP and then transferred to the acceptor end of tRNA(Ala). Also edits incorrectly charged Ser-tRNA(Ala) and Gly-tRNA(Ala) via its editing domain. In Neisseria meningitidis serogroup A / serotype 4A (strain DSM 15465 / Z2491), this protein is Alanine--tRNA ligase.